The chain runs to 500 residues: Perfringolysin O (500 aa).

The first 28 residues, 1–28, serve as a signal peptide directing secretion; it reads MIRFKKTKLIASIAMALCLFSQPVISFS. 4 consecutive transmembrane segments (beta stranded) span residues 189 to 202, 209 to 218, 287 to 296, and 304 to 316; these read KSQISSALNVNAKV, VDFNAVANNE, SKDVQAAFKA, and KNSQQYKDIYENS. The short motif at 458–468 is the Conserved undecapeptide element; the sequence is ECTGLAWEWWR. The short motif at 490 to 491 is the Cholesterol binding element; that stretch reads TL.

This sequence belongs to the cholesterol-dependent cytolysin family. In terms of assembly, homooligomeric pore complex of 35 to 50 subunits; when inserted in the host membrane.

It is found in the secreted. The protein localises to the host cell membrane. A cholesterol-dependent toxin that causes cytolysis by forming pores in cholesterol containing host membranes. After binding to target membranes, the protein assembles into a pre-pore complex. A conformation change leads to insertion in the host membrane and formation of an oligomeric pore complex. Cholesterol is required for binding to host cell membranes, membrane insertion and pore formation; cholesterol binding is mediated by a Thr-Leu pair in the C-terminus. Can be reversibly inactivated by oxidation. In Clostridium perfringens (strain ATCC 13124 / DSM 756 / JCM 1290 / NCIMB 6125 / NCTC 8237 / Type A), this protein is Perfringolysin O (pfo).